The primary structure comprises 778 residues: Preasperterpenoid A synthase PvPS (778 aa).

The segment at 1-414 (MAATKKSTAT…HRYNFHKPAA (414 aa)) is terpene cyclase. Mg(2+)-binding residues include aspartate 176 and aspartate 180. Aspartate 176 is a binding site for substrate. The short motif at 176 to 180 (DDILD) is the DDXXD 1 element. Substrate is bound by residues 266 to 269 (RVIN), asparagine 310, 314 to 318 (SWEKE), and 406 to 407 (RY). Residues 310 to 318 (NDYFSWEKE) carry the NSE/DTE motif. Over residues 414–431 (AKENEDTDDEGAKSDDSK) the composition is skewed to basic and acidic residues. The interval 415 to 778 (KENEDTDDEG…LRLLLKRLQV (364 aa)) is prenyltransferase. Residues 416 to 454 (ENEDTDDEGAKSDDSKTTLNDSTDSTVVDVKTPATSGLL) form a disordered region. 3 residues coordinate isopentenyl diphosphate: lysine 499, arginine 502, and histidine 531. Aspartate 538 and aspartate 542 together coordinate Mg(2+). The DDXXD 2 motif lies at 538-542 (DDIED). Position 547 (arginine 547) interacts with dimethylallyl diphosphate. Arginine 548 serves as a coordination point for isopentenyl diphosphate. Residues lysine 625, threonine 626, glutamine 662, asparagine 669, lysine 679, and lysine 689 each contribute to the dimethylallyl diphosphate site.

In the N-terminal section; belongs to the terpene synthase family. The protein in the C-terminal section; belongs to the FPP/GGPP synthase family. In terms of assembly, hexamer. The cofactor is Mg(2+).

The enzyme catalyses isopentenyl diphosphate + (2E,6E)-farnesyl diphosphate = (2E,6E,10E)-geranylgeranyl diphosphate + diphosphate. The catalysed reaction is isopentenyl diphosphate + (2E,6E,10E)-geranylgeranyl diphosphate = (2E,6E,10E,14E)-geranylfarnesyl diphosphate + diphosphate. It catalyses the reaction (2E,6E,10E,14E)-geranylfarnesyl diphosphate = preasperterpenoid A + diphosphate. The protein operates within secondary metabolite biosynthesis; terpenoid biosynthesis. In terms of biological role, bifunctional sesterterpene synthase that possesses both prenyl transferase and terpene cyclase activity, converting isopentenyl diphosphate and dimethylallyl diphosphate into geranylfarnesyl diphosphate (GFPP) and further converting GFPP into preasperterpenoid A. The polypeptide is Preasperterpenoid A synthase PvPS (Talaromyces verruculosus (Penicillium verruculosum)).